Consider the following 389-residue polypeptide: P2X purinoceptor 6 (389 aa).

Over 1–45 (MQLQPAGTGNMASAAAAALVSWGFLDYKTEKYVLTRNCRVGVSQR) the chain is Cytoplasmic. The helical transmembrane segment at 46 to 66 (LLQLAVVVYVIGWALLAKKGY) threads the bilayer. Residues 67-335 (QERDLAPQTS…LVTGQAGKFA (269 aa)) lie on the Extracellular side of the membrane. Intrachain disulfides connect cysteine 129–cysteine 179, cysteine 140–cysteine 163, and cysteine 146–cysteine 173. N-linked (GlcNAc...) asparagine glycans are attached at residues asparagine 167, asparagine 197, and asparagine 212. 2 cysteine pairs are disulfide-bonded: cysteine 230/cysteine 240 and cysteine 274/cysteine 283. Residues 336–356 (LIPTAITVGTGAAWLGMVTFL) traverse the membrane as a helical segment. Topologically, residues 357–389 (CDLLLLYVDREAGFYWRTKYEEARAPKTTTNSS) are cytoplasmic.

Belongs to the P2X receptor family. Unlike most P2RXs, P2RX6 does not seem to form homotrimers. P2RX6 are likely to form as obligate heteromers with other P2RXs subunits. Forms heterotrimer with P2RX2 with a variable subunit stoichiometry determined by subunit expression levels. Forms heterotrimer with P2RX4; functional differences between homomeric P2RX4 and P2RX4/6 heterotrimer are minor. Forms a P2RX2/P2RX4/P2RX6 heterotrimer. Interacts with SF3A1; resulting in a reduction of the splicing activity. N-glycosylated. N-linked glycosylation can affect trafficking to the membrane and function. As to expression, predominantly expressed in skeletal muscle. Also expressed in lung.

The protein localises to the cell membrane. It is found in the endoplasmic reticulum. Its subcellular location is the nucleus. The protein resides in the nucleus inner membrane. The enzyme catalyses Ca(2+)(in) = Ca(2+)(out). Its function is as follows. Acts as a modulatory subunit rather than a functional channel. Unlike other P2XRs members, P2RX6 does not seem to form functional homotrimers. P2RX6 requires the presence of P2RX4 or P2RX2 to form functional heterotrimeric receptors at the plasma membrane. P2RX6 can be translocated to the nucleus, where it interacts with the splicing factor (SF3A1), to reduce the incidence of mRNA splicing. May function as a nuclear regulator of post-transcriptional modifications in neurons. This Mus musculus (Mouse) protein is P2X purinoceptor 6 (P2rx6).